The following is a 338-amino-acid chain: Anthranilate phosphoribosyltransferase (338 aa).

5-phospho-alpha-D-ribose 1-diphosphate is bound by residues glycine 78, 81–82 (GD), threonine 86, 88–91 (NIST), 106–114 (KHGNRSVSS), and serine 118. Anthranilate is bound at residue glycine 78. Position 90 (serine 90) interacts with Mg(2+). Asparagine 109 is a binding site for anthranilate. Arginine 164 is a binding site for anthranilate. Residues aspartate 223 and glutamate 224 each contribute to the Mg(2+) site.

This sequence belongs to the anthranilate phosphoribosyltransferase family. Homodimer. Mg(2+) serves as cofactor.

The enzyme catalyses N-(5-phospho-beta-D-ribosyl)anthranilate + diphosphate = 5-phospho-alpha-D-ribose 1-diphosphate + anthranilate. It participates in amino-acid biosynthesis; L-tryptophan biosynthesis; L-tryptophan from chorismate: step 2/5. In terms of biological role, catalyzes the transfer of the phosphoribosyl group of 5-phosphorylribose-1-pyrophosphate (PRPP) to anthranilate to yield N-(5'-phosphoribosyl)-anthranilate (PRA). In Bacillus licheniformis (strain ATCC 14580 / DSM 13 / JCM 2505 / CCUG 7422 / NBRC 12200 / NCIMB 9375 / NCTC 10341 / NRRL NRS-1264 / Gibson 46), this protein is Anthranilate phosphoribosyltransferase.